Consider the following 686-residue polypeptide: MKFLLPTFIIFIYTLLVSALPTKEGSDPKAAKKYLVSDLPGLHDNITPDDSIPLMFAGQLEIYPESNTHYFFWKFSDSNQETITNRTIFWLNGGPGCSSMDGALLETGPFRINSQQQVISNNGSWHKSGDIIYVDQPAGTGFSYSDTYITDLDQVANYFLKFMEAYYELFPQEINNEIYFAGESYAGQYIPYIANAILQRNKKLHEGEQKYDLRGVLIGNGWVSPNEQSLSYLPFFKDHGLIDIHHPKWATLLAKHEQCQKIVNKIDSTFDDGTVHYYEVSSSTCEAILTDLLEYTQDTANDKNQQCINMYDYTLRDSYPSCGMNWPNELVNVGPFLRQEKVMHQLNLINLKKWNECNGKVGRTFQARHSIPSVHLLPELAKEIPVMLFNGANDIICNSQGVLSYLQKLQWNGETGFINKDNQISWVYDNKEVGYMLWERNISFINIYNSSHMVPYDLPDVSRALIDLITGEYDEKDVDGKKSFVTYPLGSRKENDESKNPVESPSQTIDPIISSSSSSVESSLSSSSASATDSDSTSSKFTRLIQLAVILVIFWGVYVLYASYKSRPSSIIKKPTNNTSNITRSSTGKKKNVQWADQLNQFEDDERNQESNQGIIAKAIGKITGSKDTRGRYAPVHRENDNEYIDDIELGEGISDPNVDEFIIGSDDDDEEEQPRSDPATHKSVS.

A signal peptide spans 1 to 19 (MKFLLPTFIIFIYTLLVSA). Over 20 to 543 (LPTKEGSDPK…SDSTSSKFTR (524 aa)) the chain is Lumenal. N-linked (GlcNAc...) asparagine glycosylation is found at Asn85 and Asn122. Active-site residues include Ser184 and Asp394. N-linked (GlcNAc...) asparagine glycans are attached at residues Asn441 and Asn449. The active site involves His452. The segment at 489–519 (LGSRKENDESKNPVESPSQTIDPIISSSSSS) is disordered. The segment covering 491–500 (SRKENDESKN) has biased composition (basic and acidic residues). A compositionally biased stretch (low complexity) spans 504–519 (SPSQTIDPIISSSSSS). Residues 544 to 564 (LIQLAVILVIFWGVYVLYASY) form a helical membrane-spanning segment. Over 565-686 (KSRPSSIIKK…SDPATHKSVS (122 aa)) the chain is Cytoplasmic. 2 disordered regions span residues 570-590 (SIIK…TGKK) and 627-686 (KDTR…KSVS). Low complexity predominate over residues 576–586 (TNNTSNITRSS). 2 stretches are compositionally biased toward basic and acidic residues: residues 627 to 641 (KDTR…REND) and 674 to 686 (QPRS…KSVS).

The protein belongs to the peptidase S10 family.

It localises to the golgi apparatus. The protein localises to the trans-Golgi network membrane. It carries out the reaction Preferential release of a C-terminal arginine or lysine residue.. Functionally, protease with a carboxypeptidase B-like function involved in the C-terminal processing of the lysine and arginine residues from protein precursors. Promotes cell fusion and is involved in the programmed cell death. In Candida dubliniensis (strain CD36 / ATCC MYA-646 / CBS 7987 / NCPF 3949 / NRRL Y-17841) (Yeast), this protein is Pheromone-processing carboxypeptidase KEX1 (KEX1).